Reading from the N-terminus, the 306-residue chain is Pantothenate kinase (306 aa).

An ATP-binding site is contributed by 91–98; it reads GSVAVGKS.

Belongs to the prokaryotic pantothenate kinase family.

It is found in the cytoplasm. The enzyme catalyses (R)-pantothenate + ATP = (R)-4'-phosphopantothenate + ADP + H(+). It participates in cofactor biosynthesis; coenzyme A biosynthesis; CoA from (R)-pantothenate: step 1/5. The chain is Pantothenate kinase from Streptococcus equi subsp. equi (strain 4047).